Reading from the N-terminus, the 96-residue chain is Pterin-4-alpha-carbinolamine dehydratase (96 aa).

It belongs to the pterin-4-alpha-carbinolamine dehydratase family.

Its subcellular location is the spore wall. The catalysed reaction is (4aS,6R)-4a-hydroxy-L-erythro-5,6,7,8-tetrahydrobiopterin = (6R)-L-erythro-6,7-dihydrobiopterin + H2O. Has a role in spore wall formation. The sequence is that of Pterin-4-alpha-carbinolamine dehydratase (omt2) from Schizosaccharomyces pombe (strain 972 / ATCC 24843) (Fission yeast).